Reading from the N-terminus, the 896-residue chain is Alanine--tRNA ligase (896 aa).

Zn(2+)-binding residues include His599, His603, Cys707, and His711.

It belongs to the class-II aminoacyl-tRNA synthetase family. Requires Zn(2+) as cofactor.

It is found in the cytoplasm. It carries out the reaction tRNA(Ala) + L-alanine + ATP = L-alanyl-tRNA(Ala) + AMP + diphosphate. Functionally, catalyzes the attachment of alanine to tRNA(Ala) in a two-step reaction: alanine is first activated by ATP to form Ala-AMP and then transferred to the acceptor end of tRNA(Ala). Also edits incorrectly charged Ser-tRNA(Ala) and Gly-tRNA(Ala) via its editing domain. The sequence is that of Alanine--tRNA ligase from Pyrobaculum calidifontis (strain DSM 21063 / JCM 11548 / VA1).